The primary structure comprises 261 residues: Endonuclease NucS (261 aa).

The protein belongs to the NucS endonuclease family.

The protein resides in the cytoplasm. Functionally, cleaves both 3' and 5' ssDNA extremities of branched DNA structures. In Aeropyrum pernix (strain ATCC 700893 / DSM 11879 / JCM 9820 / NBRC 100138 / K1), this protein is Endonuclease NucS.